The following is a 353-amino-acid chain: Photosystem II D2 protein (353 aa).

The residue at position 2 (T2) is an N-acetylthreonine. At T2 the chain carries Phosphothreonine. A helical transmembrane segment spans residues 41 to 61 (CAYFALGGWFTGTTFVTSWYT). Residue H118 participates in chlorophyll a binding. The helical transmembrane segment at 125 to 141 (GFMLRQFELARSVQLRP) threads the bilayer. Pheophytin a contacts are provided by Q130 and N143. Residues 153-166 (VFVSVFLIYPLGQS) traverse the membrane as a helical segment. H198 contributes to the chlorophyll a binding site. A helical membrane pass occupies residues 208–228 (AALLCAIHGATVENTLFEDGD). The a plastoquinone site is built by H215 and F262. Position 215 (H215) interacts with Fe cation. H269 provides a ligand contact to Fe cation. Residues 279-295 (GLWMSALGVVGLALNLR) form a helical membrane-spanning segment.

This sequence belongs to the reaction center PufL/M/PsbA/D family. In terms of assembly, PSII is composed of 1 copy each of membrane proteins PsbA, PsbB, PsbC, PsbD, PsbE, PsbF, PsbH, PsbI, PsbJ, PsbK, PsbL, PsbM, PsbT, PsbX, PsbY, PsbZ, Psb30/Ycf12, at least 3 peripheral proteins of the oxygen-evolving complex and a large number of cofactors. It forms dimeric complexes. The D1/D2 heterodimer binds P680, chlorophylls that are the primary electron donor of PSII, and subsequent electron acceptors. It shares a non-heme iron and each subunit binds pheophytin, quinone, additional chlorophylls, carotenoids and lipids. There is also a Cl(-1) ion associated with D1 and D2, which is required for oxygen evolution. The PSII complex binds additional chlorophylls, carotenoids and specific lipids. is required as a cofactor.

It is found in the plastid. The protein localises to the chloroplast thylakoid membrane. It catalyses the reaction 2 a plastoquinone + 4 hnu + 2 H2O = 2 a plastoquinol + O2. Functionally, photosystem II (PSII) is a light-driven water:plastoquinone oxidoreductase that uses light energy to abstract electrons from H(2)O, generating O(2) and a proton gradient subsequently used for ATP formation. It consists of a core antenna complex that captures photons, and an electron transfer chain that converts photonic excitation into a charge separation. The D1/D2 (PsbA/PsbD) reaction center heterodimer binds P680, the primary electron donor of PSII as well as several subsequent electron acceptors. D2 is needed for assembly of a stable PSII complex. The polypeptide is Photosystem II D2 protein (Populus trichocarpa (Western balsam poplar)).